The primary structure comprises 437 residues: tRNA-2-methylthio-N(6)-dimethylallyladenosine synthase (437 aa).

Residues 1–115 form the MTTase N-terminal domain; sequence MKVYIETMGC…ISQVIHKEKA (115 aa). 6 residues coordinate [4Fe-4S] cluster: Cys10, Cys46, Cys78, Cys148, Cys152, and Cys155. The 234-residue stretch at 134–367 folds into the Radical SAM core domain; that stretch reads KKAQIRSLLN…QNRHKEILEE (234 aa). A TRAM domain is found at 370-436; it reads KLEVGKTHVV…KGRLIAAIKG (67 aa).

The protein belongs to the methylthiotransferase family. MiaB subfamily. Monomer. Requires [4Fe-4S] cluster as cofactor.

It is found in the cytoplasm. It catalyses the reaction N(6)-dimethylallyladenosine(37) in tRNA + (sulfur carrier)-SH + AH2 + 2 S-adenosyl-L-methionine = 2-methylsulfanyl-N(6)-dimethylallyladenosine(37) in tRNA + (sulfur carrier)-H + 5'-deoxyadenosine + L-methionine + A + S-adenosyl-L-homocysteine + 2 H(+). Functionally, catalyzes the methylthiolation of N6-(dimethylallyl)adenosine (i(6)A), leading to the formation of 2-methylthio-N6-(dimethylallyl)adenosine (ms(2)i(6)A) at position 37 in tRNAs that read codons beginning with uridine. The protein is tRNA-2-methylthio-N(6)-dimethylallyladenosine synthase of Helicobacter pylori (strain HPAG1).